A 268-amino-acid chain; its full sequence is Acidic leucine-rich nuclear phosphoprotein 32 family member E (268 aa).

Residue Met1 is modified to N-acetylmethionine. LRR repeat units lie at residues 18–38, 43–64, 65–87, and 89–110; these read EVTE…EGLN, ELEF…PSLN, KLRK…AEKC, and NLTY…EALQ. A Glycyl lysine isopeptide (Lys-Gly) (interchain with G-Cter in SUMO2) cross-link involves residue Lys68. The LRRCT domain maps to 123–161; the sequence is CEITNLEDYRESIFELLQQITYLDGFDQEDNEAPDSEEE. Acidic residues-rich tracts occupy residues 149-216 and 226-247; these read DQED…EEEV and IQDE…EEEE. The segment at 149–268 is disordered; it reads DQEDNEAPDS…AEDDGEEEDD (120 aa). Positions 215–268 are ZID domain; the sequence is EVGLSYLMKEEIQDEEDDDDYVEEGEEEEEEEEGGLRGEKRKRDAEDDGEEEDD. Positions 248–259 are enriched in basic and acidic residues; sequence GGLRGEKRKRDA.

This sequence belongs to the ANP32 family. In terms of assembly, interacts with the importin alpha KPNA1 and KPNA2. Component of a SWR1-like complex, composed of EP400, KAT5/TIP60, TRRAP, BRD8, RUVBL1, RUVBL2, ING3 and ANP32E; the complex does not contain SRCAP. Interacts with H2A.Z/H2AZ1. In terms of processing, phosphorylated. The phosphorylation is nuclear localization signal (NLS)-dependent. Expressed in peripheral blood leukocytes, colon, small intestine, prostate, thymus, spleen, skeletal muscle, liver and kidney.

It localises to the cytoplasm. The protein resides in the nucleus. Its function is as follows. Histone chaperone that specifically mediates the genome-wide removal of histone H2A.Z/H2AZ1 from the nucleosome: removes H2A.Z/H2AZ1 from its normal sites of deposition, especially from enhancer and insulator regions. Not involved in deposition of H2A.Z/H2AZ1 in the nucleosome. May stabilize the evicted H2A.Z/H2AZ1-H2B dimer, thus shifting the equilibrium towards dissociation and the off-chromatin state. Inhibits activity of protein phosphatase 2A (PP2A). Does not inhibit protein phosphatase 1. May play a role in cerebellar development and synaptogenesis. The protein is Acidic leucine-rich nuclear phosphoprotein 32 family member E (ANP32E) of Homo sapiens (Human).